The primary structure comprises 78 residues: Exodeoxyribonuclease 7 small subunit (78 aa).

Belongs to the XseB family. As to quaternary structure, heterooligomer composed of large and small subunits.

It is found in the cytoplasm. The catalysed reaction is Exonucleolytic cleavage in either 5'- to 3'- or 3'- to 5'-direction to yield nucleoside 5'-phosphates.. In terms of biological role, bidirectionally degrades single-stranded DNA into large acid-insoluble oligonucleotides, which are then degraded further into small acid-soluble oligonucleotides. This chain is Exodeoxyribonuclease 7 small subunit, found in Paracoccus zeaxanthinifaciens.